The chain runs to 333 residues: Adenosine deaminase (333 aa).

Zn(2+)-binding residues include His12 and His14. The substrate site is built by His14, Asp16, and Gly170. His197 is a binding site for Zn(2+). Glu200 functions as the Proton donor in the catalytic mechanism. Asp278 serves as a coordination point for Zn(2+). Asp279 provides a ligand contact to substrate.

Belongs to the metallo-dependent hydrolases superfamily. Adenosine and AMP deaminases family. Adenosine deaminase subfamily. Requires Zn(2+) as cofactor.

The catalysed reaction is adenosine + H2O + H(+) = inosine + NH4(+). It catalyses the reaction 2'-deoxyadenosine + H2O + H(+) = 2'-deoxyinosine + NH4(+). Its function is as follows. Catalyzes the hydrolytic deamination of adenosine and 2-deoxyadenosine. The polypeptide is Adenosine deaminase (Escherichia coli O45:K1 (strain S88 / ExPEC)).